Reading from the N-terminus, the 414-residue chain is MSGPGLLVELLGEKLVNSEREEADVQALGSRVSLIGLLFGCGMSAPCLQLLPGLKDFYCKTRDRLEIVFVSSDPDQKKWQLFVKDMPWLALPYQEKHRKLKLWNKFRISNIPSLIFIEASTVKTVCRNGLLLVKDDPEGLEFPWGPKPFCEVIAGPLIRNNSQSQESSTLEGSYVGIYFSAYWCPPCRSLTRVLVESYRKIKESGQKFEIVLVSADRSEESFKQYFSEMPWLAVPYSDEARRSRLNRLYGIQGIPNLIILDPKGEVITRQGRVEVLRDIDCKEFPWHPKPVVELTELNAVQLNEGPCLVLFVDSEDEGESEAAKQLIQPIAEKIIAQHKAKDEDAPLLFFVAGEDDMTDSLRDFTNLPEAAPLLTILDMSARAKYVMDVEEITPEIVQSFVTDFLAEKLKPEPI.

Residues Leu-131–Gly-305 enclose the Thioredoxin domain.

The protein belongs to the nucleoredoxin family.

The protein localises to the cytoplasm. It localises to the cytosol. Its subcellular location is the nucleus. It carries out the reaction [protein]-dithiol + NAD(+) = [protein]-disulfide + NADH + H(+). The enzyme catalyses [protein]-dithiol + NADP(+) = [protein]-disulfide + NADPH + H(+). In terms of biological role, functions as a redox-dependent negative regulator of the Wnt signaling pathway. This is Nucleoredoxin (nxn) from Xenopus laevis (African clawed frog).